A 335-amino-acid polypeptide reads, in one-letter code: Phosphate acyltransferase (335 aa).

It belongs to the PlsX family. Homodimer. Probably interacts with PlsY.

The protein localises to the cytoplasm. The catalysed reaction is a fatty acyl-[ACP] + phosphate = an acyl phosphate + holo-[ACP]. Its pathway is lipid metabolism; phospholipid metabolism. Catalyzes the reversible formation of acyl-phosphate (acyl-PO(4)) from acyl-[acyl-carrier-protein] (acyl-ACP). This enzyme utilizes acyl-ACP as fatty acyl donor, but not acyl-CoA. This chain is Phosphate acyltransferase, found in Streptococcus uberis (strain ATCC BAA-854 / 0140J).